The sequence spans 360 residues: Aminomethyltransferase (360 aa).

The protein belongs to the GcvT family. As to quaternary structure, the glycine cleavage system is composed of four proteins: P, T, L and H.

The enzyme catalyses N(6)-[(R)-S(8)-aminomethyldihydrolipoyl]-L-lysyl-[protein] + (6S)-5,6,7,8-tetrahydrofolate = N(6)-[(R)-dihydrolipoyl]-L-lysyl-[protein] + (6R)-5,10-methylene-5,6,7,8-tetrahydrofolate + NH4(+). The glycine cleavage system catalyzes the degradation of glycine. This is Aminomethyltransferase from Pseudomonas aeruginosa (strain ATCC 15692 / DSM 22644 / CIP 104116 / JCM 14847 / LMG 12228 / 1C / PRS 101 / PAO1).